Here is a 356-residue protein sequence, read N- to C-terminus: Chorismate synthase (356 aa).

2 residues coordinate NADP(+): Arg44 and Arg49. FMN contacts are provided by residues 121 to 123 (HFS), Gly278, 293 to 297 (KPTPS), and Arg320.

The protein belongs to the chorismate synthase family. Requires FMNH2 as cofactor.

The catalysed reaction is 5-O-(1-carboxyvinyl)-3-phosphoshikimate = chorismate + phosphate. Its pathway is metabolic intermediate biosynthesis; chorismate biosynthesis; chorismate from D-erythrose 4-phosphate and phosphoenolpyruvate: step 7/7. In terms of biological role, catalyzes the anti-1,4-elimination of the C-3 phosphate and the C-6 proR hydrogen from 5-enolpyruvylshikimate-3-phosphate (EPSP) to yield chorismate, which is the branch point compound that serves as the starting substrate for the three terminal pathways of aromatic amino acid biosynthesis. This reaction introduces a second double bond into the aromatic ring system. This chain is Chorismate synthase, found in Thermococcus gammatolerans (strain DSM 15229 / JCM 11827 / EJ3).